Reading from the N-terminus, the 683-residue chain is Eukaryotic translation initiation factor 3 subunit B (683 aa).

The tract at residues 1–25 is disordered; sequence MAKKKGEEQDFEEEPNFDDPEGFVD. Acidic residues predominate over residues 9–25; the sequence is QDFEEEPNFDDPEGFVD. In terms of domain architecture, RRM spans 49–133; that stretch reads NVIVVDNIPV…YTLLVNRFAD (85 aa). WD repeat units follow at residues 199-238, 240-279, 283-321, 324-359, 435-477, and 522-567; these read KRER…KVNK, AHSN…EKRT, DGMS…LLDM, IRVE…TLMA, EVKE…EPVL, and GDHY…KRVN. A coiled-coil region spans residues 611 to 638; it reads MTRASKELIEKRAKLREQFTEYRSKRVK.

The protein belongs to the eIF-3 subunit B family. In terms of assembly, component of the eukaryotic translation initiation factor 3 (eIF-3) complex.

The protein resides in the cytoplasm. Its function is as follows. RNA-binding component of the eukaryotic translation initiation factor 3 (eIF-3) complex, which is involved in protein synthesis of a specialized repertoire of mRNAs and, together with other initiation factors, stimulates binding of mRNA and methionyl-tRNAi to the 40S ribosome. The eIF-3 complex specifically targets and initiates translation of a subset of mRNAs involved in cell proliferation. The chain is Eukaryotic translation initiation factor 3 subunit B from Anopheles gambiae (African malaria mosquito).